The primary structure comprises 295 residues: ATP synthase gamma chain (295 aa).

The protein belongs to the ATPase gamma chain family. F-type ATPases have 2 components, CF(1) - the catalytic core - and CF(0) - the membrane proton channel. CF(1) has five subunits: alpha(3), beta(3), gamma(1), delta(1), epsilon(1). CF(0) has three main subunits: a, b and c.

It is found in the cell inner membrane. In terms of biological role, produces ATP from ADP in the presence of a proton gradient across the membrane. The gamma chain is believed to be important in regulating ATPase activity and the flow of protons through the CF(0) complex. In Cytophaga hutchinsonii (strain ATCC 33406 / DSM 1761 / CIP 103989 / NBRC 15051 / NCIMB 9469 / D465), this protein is ATP synthase gamma chain.